Reading from the N-terminus, the 251-residue chain is Triosephosphate isomerase (251 aa).

Substrate is bound at residue 9-11 (NWK). Histidine 95 serves as the catalytic Electrophile. The Proton acceptor role is filled by glutamate 167. Residues glycine 173, serine 213, and 234 to 235 (GG) contribute to the substrate site. Residue serine 213 is modified to Phosphoserine.

This sequence belongs to the triosephosphate isomerase family. Homodimer.

The protein localises to the cytoplasm. It carries out the reaction D-glyceraldehyde 3-phosphate = dihydroxyacetone phosphate. It functions in the pathway carbohydrate biosynthesis; gluconeogenesis. It participates in carbohydrate degradation; glycolysis; D-glyceraldehyde 3-phosphate from glycerone phosphate: step 1/1. Involved in the gluconeogenesis. Catalyzes stereospecifically the conversion of dihydroxyacetone phosphate (DHAP) to D-glyceraldehyde-3-phosphate (G3P). This is Triosephosphate isomerase from Bacillus cereus (strain ATCC 10987 / NRS 248).